Here is a 437-residue protein sequence, read N- to C-terminus: MQVSVENTSALERRMTIAVPAERVENEVNKRLQQTAKRAKIAGFRPGKVPMNVIRQRFEADARQEAFGDLVQASFYEAIVEQKLNPAGAPAVEPKSFEKGKDLEFVAIFEVFPEFTVSGLESINVERLSAEVADADLDNMLEVLRKQNTRFEAVERAAQNDDQVNIDFVGKVDGEVFAGGSAKGTQLVLGSGRMIPGFEDGLVGAKAGEERVVNVTFPEDYQNLDLAGKAAEFTITVNSVSAPVLPELNEEFFAQFGIKESTLEGFRAEVRKNMERELRQAIKTKVKNQVMDGLLAANPIEVPKALLENEVNRLRVQAVQQFGGNIKPEQLPVELFEEQAKRRVVLGLIVAEVVKQFELKPDDAKVREMIEEMASAYQEPEQVIAWYYKNDQQLNEVRSVVLEEQVVDTVLQKATVTDKSVSYEDAVKPAEAPAAAE.

Residues 161 to 246 (DDQVNIDFVG…VNSVSAPVLP (86 aa)) form the PPIase FKBP-type domain.

This sequence belongs to the FKBP-type PPIase family. Tig subfamily.

The protein localises to the cytoplasm. The catalysed reaction is [protein]-peptidylproline (omega=180) = [protein]-peptidylproline (omega=0). Involved in protein export. Acts as a chaperone by maintaining the newly synthesized protein in an open conformation. Functions as a peptidyl-prolyl cis-trans isomerase. This is Trigger factor from Pseudomonas putida (strain GB-1).